Reading from the N-terminus, the 244-residue chain is Adenosylcobinamide-GDP ribazoletransferase (244 aa).

5 helical membrane-spanning segments follow: residues 33 to 53 (WFAV…WLGA), 57 to 77 (PWLA…GLHL), 109 to 129 (FAVI…MLAV), 132 to 152 (GVGW…AVWW), and 176 to 196 (FWLS…VLLL).

This sequence belongs to the CobS family. It depends on Mg(2+) as a cofactor.

The protein localises to the cell inner membrane. The catalysed reaction is alpha-ribazole + adenosylcob(III)inamide-GDP = adenosylcob(III)alamin + GMP + H(+). The enzyme catalyses alpha-ribazole 5'-phosphate + adenosylcob(III)inamide-GDP = adenosylcob(III)alamin 5'-phosphate + GMP + H(+). The protein operates within cofactor biosynthesis; adenosylcobalamin biosynthesis; adenosylcobalamin from cob(II)yrinate a,c-diamide: step 7/7. Joins adenosylcobinamide-GDP and alpha-ribazole to generate adenosylcobalamin (Ado-cobalamin). Also synthesizes adenosylcobalamin 5'-phosphate from adenosylcobinamide-GDP and alpha-ribazole 5'-phosphate. In Laribacter hongkongensis (strain HLHK9), this protein is Adenosylcobinamide-GDP ribazoletransferase.